We begin with the raw amino-acid sequence, 295 residues long: MPSPRRSMEGRPLGVSASSSSSSPGSPAHGGGGGGSRFEFQSLLSSRATAVDPTCARLRASESPVHRRGSFPLAAAGPSQSPAPPLPEEDRMDLNPSFLGIALRSLLAIDLWLSKKLGVCAGESSSWGSVRPLMKLLEISGHGIPWLLGTLYCLCRSDSWAGREVLMNLLFALLLDLLLVALIKGLVRRRRPAHNQMDMFVTLSVDKYSFPSGHATRAALMSRFILNHLVLAIPLRVLVVLWAFVLGLSRVMLGRHNVTDVAFGFFLGYMQYSIVDYCWLSPHNAPVLFLLWSQR.

Disordered stretches follow at residues Met-1 to Glu-39 and Ser-61 to Asp-90. Residues Met-1–Pro-132 are Cytoplasmic-facing. Low complexity predominate over residues Ser-16–Pro-27. Phosphoserine is present on residues Ser-26, Ser-36, and Ser-70. A helical membrane pass occupies residues Leu-133–Cys-153. Over Leu-154–Glu-164 the chain is Lumenal. A helical transmembrane segment spans residues Val-165–Gly-185. Positions Lys-184–Pro-192 are phosphatase sequence motif I. Residues Leu-186 to His-228 lie on the Cytoplasmic side of the membrane. Positions Pro-211–His-214 are phosphatase sequence motif II. The active-site Proton donors is His-214. Residues Leu-229–Ser-249 form a helical membrane-spanning segment. A phosphatase sequence motif III region spans residues Ser-249 to Asp-260. At Arg-250 to Asp-260 the chain is on the lumenal side. His-256 (nucleophile) is an active-site residue. Residues Val-261–Ser-281 traverse the membrane as a helical segment. The Cytoplasmic portion of the chain corresponds to Pro-282–Arg-295.

The protein belongs to the PA-phosphatase related phosphoesterase family. In terms of processing, phosphorylation by PKC activates the phosphatase activity towards presqualene diphosphate. Widely expressed. Expressed in most organs, in particular gastrointestinal organs, spleen, placenta, kidney, thymus and brain.

Its subcellular location is the endoplasmic reticulum membrane. The protein resides in the nucleus envelope. The protein localises to the nucleus inner membrane. The catalysed reaction is presqualene diphosphate + H2O = presqualene phosphate + phosphate + H(+). The enzyme catalyses presqualene phosphate + H2O = presqualene alcohol + phosphate. It carries out the reaction (2E,6E)-farnesyl diphosphate + H2O = (2E,6E)-farnesyl phosphate + phosphate + H(+). It catalyses the reaction (2E,6E)-farnesyl phosphate + H2O = (2E,6E)-farnesol + phosphate. The catalysed reaction is (2E,6E,10E)-geranylgeranyl diphosphate + H2O = (2E,6E,10E)-geranylgeranyl phosphate + phosphate + H(+). The enzyme catalyses (2E,6E,10E)-geranylgeranyl phosphate + H2O = (2E,6E,10E)-geranylgeraniol + phosphate. It carries out the reaction (2E)-geranyl diphosphate + H2O = (2E)-geranyl phosphate + phosphate + H(+). It catalyses the reaction (2E)-geranyl phosphate + H2O = (2E)-geraniol + phosphate. The catalysed reaction is 1,2-dihexadecanoyl-sn-glycero-3-phosphate + H2O = 1,2-dihexadecanoyl-sn-glycerol + phosphate. Its activity is regulated as follows. Inhibited by propranolol. Not inhibited by N-ethylmaleimide or bromoenolactome. In terms of biological role, magnesium-independent polyisoprenoid diphosphatase that catalyzes the sequential dephosphorylation of presqualene, farnesyl, geranyl and geranylgeranyl diphosphates. Functions in the innate immune response through the dephosphorylation of presqualene diphosphate which acts as a potent inhibitor of the signaling pathways contributing to polymorphonuclear neutrophils activation. May regulate the biosynthesis of cholesterol and related sterols by dephosphorylating presqualene and farnesyl diphosphate, two key intermediates in this biosynthetic pathway. May also play a role in protein prenylation by acting on farnesyl diphosphate and its derivative geranylgeranyl diphosphate, two precursors for the addition of isoprenoid anchors to membrane proteins. Has a lower activity towards phosphatidic acid (PA), but through phosphatidic acid dephosphorylation may participate in the biosynthesis of phospholipids and triacylglycerols. May also act on ceramide-1-P, lysophosphatidic acid (LPA) and sphing-4-enine 1-phosphate/sphingosine-1-phosphate. The sequence is that of Polyisoprenoid diphosphate/phosphate phosphohydrolase PLPP6 from Homo sapiens (Human).